Reading from the N-terminus, the 586-residue chain is NudC domain-containing protein 1 (586 aa).

Positions 275-364 (KREPLYNWQQ…EPGCTWAELV (90 aa)) constitute a CS domain.

Its subcellular location is the cytoplasm. The protein resides in the nucleus. The sequence is that of NudC domain-containing protein 1 from Xenopus laevis (African clawed frog).